The sequence spans 317 residues: Ribosomal RNA small subunit methyltransferase H (317 aa).

S-adenosyl-L-methionine is bound by residues 39–41 (GGH), aspartate 59, phenylalanine 83, aspartate 104, and glutamine 111.

Belongs to the methyltransferase superfamily. RsmH family.

It localises to the cytoplasm. It carries out the reaction cytidine(1402) in 16S rRNA + S-adenosyl-L-methionine = N(4)-methylcytidine(1402) in 16S rRNA + S-adenosyl-L-homocysteine + H(+). Its function is as follows. Specifically methylates the N4 position of cytidine in position 1402 (C1402) of 16S rRNA. The polypeptide is Ribosomal RNA small subunit methyltransferase H (Paraburkholderia phytofirmans (strain DSM 17436 / LMG 22146 / PsJN) (Burkholderia phytofirmans)).